Consider the following 266-residue polypeptide: 4-hydroxy-tetrahydrodipicolinate reductase (266 aa).

NAD(+) is bound at residue 10–15 (GPRGRM). An NADP(+)-binding site is contributed by lysine 38. NAD(+) contacts are provided by residues 99–101 (GTT) and 125–128 (APNF). Residue histidine 155 is the Proton donor/acceptor of the active site. Residue histidine 156 participates in (S)-2,3,4,5-tetrahydrodipicolinate binding. Lysine 159 acts as the Proton donor in catalysis. (S)-2,3,4,5-tetrahydrodipicolinate is bound at residue 165 to 166 (GT).

Belongs to the DapB family.

Its subcellular location is the cytoplasm. It catalyses the reaction (S)-2,3,4,5-tetrahydrodipicolinate + NAD(+) + H2O = (2S,4S)-4-hydroxy-2,3,4,5-tetrahydrodipicolinate + NADH + H(+). The catalysed reaction is (S)-2,3,4,5-tetrahydrodipicolinate + NADP(+) + H2O = (2S,4S)-4-hydroxy-2,3,4,5-tetrahydrodipicolinate + NADPH + H(+). It participates in amino-acid biosynthesis; L-lysine biosynthesis via DAP pathway; (S)-tetrahydrodipicolinate from L-aspartate: step 4/4. Its function is as follows. Catalyzes the conversion of 4-hydroxy-tetrahydrodipicolinate (HTPA) to tetrahydrodipicolinate. This is 4-hydroxy-tetrahydrodipicolinate reductase from Bacillus cereus (strain ATCC 14579 / DSM 31 / CCUG 7414 / JCM 2152 / NBRC 15305 / NCIMB 9373 / NCTC 2599 / NRRL B-3711).